The sequence spans 68 residues: Large ribosomal subunit protein bL35 (68 aa).

It belongs to the bacterial ribosomal protein bL35 family.

The protein is Large ribosomal subunit protein bL35 of Rickettsia felis (strain ATCC VR-1525 / URRWXCal2) (Rickettsia azadi).